A 186-amino-acid polypeptide reads, in one-letter code: Casparian strip membrane protein 5 (186 aa).

The Cytoplasmic portion of the chain corresponds to Met1–Ala23. A helical transmembrane segment spans residues Val24 to Ile44. Over Ala45–Thr73 the chain is Extracellular. N-linked (GlcNAc...) asparagine glycosylation is present at Asn50. A helical transmembrane segment spans residues Phe74–Ile94. Topologically, residues Val95–Arg106 are cytoplasmic. A helical transmembrane segment spans residues Leu107–Ala127. At Ala128 to Ser160 the chain is on the extracellular side. A helical transmembrane segment spans residues Leu161–Ala181. Residues Leu182–His186 lie on the Cytoplasmic side of the membrane.

This sequence belongs to the Casparian strip membrane proteins (CASP) family. In terms of assembly, homodimer and heterodimers.

It is found in the cell membrane. Its function is as follows. Regulates membrane-cell wall junctions and localized cell wall deposition. Required for establishment of the Casparian strip membrane domain (CSD) and the subsequent formation of Casparian strips, a cell wall modification of the root endodermis that determines an apoplastic barrier between the intraorganismal apoplasm and the extraorganismal apoplasm and prevents lateral diffusion. The chain is Casparian strip membrane protein 5 from Oryza sativa subsp. japonica (Rice).